The sequence spans 201 residues: Ribosome maturation factor RimM (201 aa).

The PRC barrel domain maps to 94-168 (EDEYYHADLI…RLVADPPLGL (75 aa)). A disordered region spans residues 164–201 (PPLGLLDDTRPPAGVEGEVEEDPGVGIDEDGDGKGGAS). Residues 180-194 (GEVEEDPGVGIDEDG) are compositionally biased toward acidic residues.

This sequence belongs to the RimM family. Binds ribosomal protein uS19.

The protein localises to the cytoplasm. In terms of biological role, an accessory protein needed during the final step in the assembly of 30S ribosomal subunit, possibly for assembly of the head region. Essential for efficient processing of 16S rRNA. May be needed both before and after RbfA during the maturation of 16S rRNA. It has affinity for free ribosomal 30S subunits but not for 70S ribosomes. This is Ribosome maturation factor RimM from Rhodospirillum rubrum (strain ATCC 11170 / ATH 1.1.1 / DSM 467 / LMG 4362 / NCIMB 8255 / S1).